A 137-amino-acid chain; its full sequence is Phosphoribosyl-AMP cyclohydrolase (137 aa).

Residue D84 participates in Mg(2+) binding. Residue C85 coordinates Zn(2+). D86 and D88 together coordinate Mg(2+). Residues C101 and C108 each coordinate Zn(2+).

This sequence belongs to the PRA-CH family. As to quaternary structure, homodimer. Mg(2+) serves as cofactor. Requires Zn(2+) as cofactor.

The protein resides in the cytoplasm. It carries out the reaction 1-(5-phospho-beta-D-ribosyl)-5'-AMP + H2O = 1-(5-phospho-beta-D-ribosyl)-5-[(5-phospho-beta-D-ribosylamino)methylideneamino]imidazole-4-carboxamide. It functions in the pathway amino-acid biosynthesis; L-histidine biosynthesis; L-histidine from 5-phospho-alpha-D-ribose 1-diphosphate: step 3/9. Catalyzes the hydrolysis of the adenine ring of phosphoribosyl-AMP. The sequence is that of Phosphoribosyl-AMP cyclohydrolase from Pelodictyon phaeoclathratiforme (strain DSM 5477 / BU-1).